The chain runs to 519 residues: Cytochrome P450 52A12 (519 aa).

A heme-binding site is contributed by Cys-467.

This sequence belongs to the cytochrome P450 family. It depends on heme as a cofactor.

The protein localises to the membrane. Together with an NADPH cytochrome P450 the enzyme system catalyzes the terminal hydroxylation as the first step in the assimilation of alkanes and fatty acids. The polypeptide is Cytochrome P450 52A12 (CYP52A12) (Debaryomyces hansenii (Yeast)).